A 228-amino-acid chain; its full sequence is Cytochrome c oxidase subunit 2 (228 aa).

The Mitochondrial intermembrane segment spans residues 1-26 (MTTWANMNLQDSASPIMEQLIYFHDH). Residues 27–48 (ALMIIIMILMVVSYMMIAMVFN) traverse the membrane as a helical segment. Residues 49–62 (KYINRFLLEGQMIE) lie on the Mitochondrial matrix side of the membrane. Residues 63–82 (LAWTIAPAVILIFIAVPSLR) form a helical membrane-spanning segment. Residues 83–228 (LLYLMDEINT…FINWILKMNM (146 aa)) lie on the Mitochondrial intermembrane side of the membrane. Residues His-161, Cys-196, Glu-198, Cys-200, His-204, and Met-207 each contribute to the Cu cation site. Glu-198 serves as a coordination point for Mg(2+).

It belongs to the cytochrome c oxidase subunit 2 family. As to quaternary structure, component of the cytochrome c oxidase (complex IV, CIV), a multisubunit enzyme composed of a catalytic core of 3 subunits and several supernumerary subunits. The complex exists as a monomer or a dimer and forms supercomplexes (SCs) in the inner mitochondrial membrane with ubiquinol-cytochrome c oxidoreductase (cytochrome b-c1 complex, complex III, CIII). Cu cation serves as cofactor.

The protein resides in the mitochondrion inner membrane. The enzyme catalyses 4 Fe(II)-[cytochrome c] + O2 + 8 H(+)(in) = 4 Fe(III)-[cytochrome c] + 2 H2O + 4 H(+)(out). Component of the cytochrome c oxidase, the last enzyme in the mitochondrial electron transport chain which drives oxidative phosphorylation. The respiratory chain contains 3 multisubunit complexes succinate dehydrogenase (complex II, CII), ubiquinol-cytochrome c oxidoreductase (cytochrome b-c1 complex, complex III, CIII) and cytochrome c oxidase (complex IV, CIV), that cooperate to transfer electrons derived from NADH and succinate to molecular oxygen, creating an electrochemical gradient over the inner membrane that drives transmembrane transport and the ATP synthase. Cytochrome c oxidase is the component of the respiratory chain that catalyzes the reduction of oxygen to water. Electrons originating from reduced cytochrome c in the intermembrane space (IMS) are transferred via the dinuclear copper A center (CU(A)) of subunit 2 and heme A of subunit 1 to the active site in subunit 1, a binuclear center (BNC) formed by heme A3 and copper B (CU(B)). The BNC reduces molecular oxygen to 2 water molecules using 4 electrons from cytochrome c in the IMS and 4 protons from the mitochondrial matrix. This is Cytochrome c oxidase subunit 2 (COII) from Periplaneta americana (American cockroach).